The following is a 129-amino-acid chain: Large ribosomal subunit protein uL22 (129 aa).

It belongs to the universal ribosomal protein uL22 family. In terms of assembly, part of the 50S ribosomal subunit.

Functionally, this protein binds specifically to 23S rRNA; its binding is stimulated by other ribosomal proteins, e.g. L4, L17, and L20. It is important during the early stages of 50S assembly. It makes multiple contacts with different domains of the 23S rRNA in the assembled 50S subunit and ribosome. The globular domain of the protein is located near the polypeptide exit tunnel on the outside of the subunit, while an extended beta-hairpin is found that lines the wall of the exit tunnel in the center of the 70S ribosome. In Aster yellows witches'-broom phytoplasma (strain AYWB), this protein is Large ribosomal subunit protein uL22.